The chain runs to 218 residues: Nonsense-mediated decay protein 4 (218 aa).

It is found in the cytoplasm. In terms of biological role, involved in nonsense-mediated decay of mRNAs containing premature stop codons. The sequence is that of Nonsense-mediated decay protein 4 (NMD4) from Saccharomyces cerevisiae (strain ATCC 204508 / S288c) (Baker's yeast).